A 990-amino-acid polypeptide reads, in one-letter code: Mediator of RNA polymerase II transcription subunit 5 (990 aa).

The protein belongs to the Mediator complex subunit 5 family. Component of the Mediator complex.

It localises to the nucleus. Its function is as follows. Component of the Mediator complex, a coactivator involved in the regulated transcription of nearly all RNA polymerase II-dependent genes. Mediator functions as a bridge to convey information from gene-specific regulatory proteins to the basal RNA polymerase II transcription machinery. Mediator is recruited to promoters by direct interactions with regulatory proteins and serves as a scaffold for the assembly of a functional preinitiation complex with RNA polymerase II and the general transcription factors. This chain is Mediator of RNA polymerase II transcription subunit 5 (NUT1), found in Debaryomyces hansenii (strain ATCC 36239 / CBS 767 / BCRC 21394 / JCM 1990 / NBRC 0083 / IGC 2968) (Yeast).